A 597-amino-acid polypeptide reads, in one-letter code: Arginine--tRNA ligase (597 aa).

The 'HIGH' region signature appears at 125-135 (PNTNKPLHLGH).

This sequence belongs to the class-I aminoacyl-tRNA synthetase family. In terms of assembly, monomer.

It localises to the cytoplasm. It catalyses the reaction tRNA(Arg) + L-arginine + ATP = L-arginyl-tRNA(Arg) + AMP + diphosphate. The sequence is that of Arginine--tRNA ligase from Porphyromonas gingivalis (strain ATCC BAA-308 / W83).